The following is a 363-amino-acid chain: MSHNTFGHLFRVTTWGESHGPSIGAVVDGCPAGIPLTETDLQPFLDLRRPGTSRHVTPRQEPDQVRILSGTFEDDRTDGPVTTGAPISLMIENTDQRSKDYSAIRDKWRPGHADYTYDMKYGIRDYRGGGRSSARETAMRVAAGGIARKVLGDGISIRAALVQVGDRAIDRSRWDWDEVSNNPFFCPDATTAALWEADMDALRRAGSSTGAIVEVVVSGVPVGWGAPVYAKLDSELAAAMMTINAVKGVEIGAGFGSAAMRGEDAADEMRMGEDGPVFLSNHNGGVLGGISTGQDLVVRFAVKPTSSITVERNTLDRNFEETVIETRGRHDPCVGIRAVPVGEAMAALVLADQKLRHAGQSAY.

Residues Arg48 and Arg54 each coordinate NADP(+). Residues 131-133 (RSS), 244-245 (NA), Gly288, 303-307 (KPTSS), and Arg329 contribute to the FMN site.

Belongs to the chorismate synthase family. Homotetramer. It depends on FMNH2 as a cofactor.

It carries out the reaction 5-O-(1-carboxyvinyl)-3-phosphoshikimate = chorismate + phosphate. It participates in metabolic intermediate biosynthesis; chorismate biosynthesis; chorismate from D-erythrose 4-phosphate and phosphoenolpyruvate: step 7/7. In terms of biological role, catalyzes the anti-1,4-elimination of the C-3 phosphate and the C-6 proR hydrogen from 5-enolpyruvylshikimate-3-phosphate (EPSP) to yield chorismate, which is the branch point compound that serves as the starting substrate for the three terminal pathways of aromatic amino acid biosynthesis. This reaction introduces a second double bond into the aromatic ring system. The sequence is that of Chorismate synthase from Maricaulis maris (strain MCS10) (Caulobacter maris).